We begin with the raw amino-acid sequence, 430 residues long: Phosphomethylpyrimidine synthase (430 aa).

Substrate is bound by residues Asn67, Met96, Tyr125, His161, 183–185 (SRG), 224–227 (DALR), and Glu263. His267 serves as a coordination point for Zn(2+). Substrate is bound at residue Tyr290. Residue His331 coordinates Zn(2+). 3 residues coordinate [4Fe-4S] cluster: Cys406, Cys409, and Cys413.

It belongs to the ThiC family. Homodimer. [4Fe-4S] cluster serves as cofactor.

The enzyme catalyses 5-amino-1-(5-phospho-beta-D-ribosyl)imidazole + S-adenosyl-L-methionine = 4-amino-2-methyl-5-(phosphooxymethyl)pyrimidine + CO + 5'-deoxyadenosine + formate + L-methionine + 3 H(+). It functions in the pathway cofactor biosynthesis; thiamine diphosphate biosynthesis. Catalyzes the synthesis of the hydroxymethylpyrimidine phosphate (HMP-P) moiety of thiamine from aminoimidazole ribotide (AIR) in a radical S-adenosyl-L-methionine (SAM)-dependent reaction. In Campylobacter jejuni (strain RM1221), this protein is Phosphomethylpyrimidine synthase.